Here is a 96-residue protein sequence, read N- to C-terminus: Putative antiholin (96 aa).

The Periplasmic segment spans residues 1 to 4 (MIEM). 2 consecutive stretches face the cytoplasmic side: residues 1–32 (MIEM…KKTE) and 26–29 (QAIK). Residues 5–25 (EFGKELLVYMTFLVVVTPVFV) form a helical membrane-spanning segment. Residues 33–55 (LVPSKWLPTVSILIGAILGALAT) traverse the membrane as a helical segment. Over 56–60 (FLDGS) the chain is Periplasmic. Residues 61–81 (GSLATMIWAGALAGAGGTGLF) form a helical membrane-spanning segment. Residues 82-96 (EQFTNRSKKYGEDDK) lie on the Cytoplasmic side of the membrane.

In terms of assembly, homomultimer. Interacts with isoform Antiholin; this interaction blocks the holin homomultimerization and delays host cell lysis.

The protein resides in the host cell inner membrane. In terms of biological role, accumulates harmlessly in the cytoplasmic membrane until it reaches a critical concentration that triggers the formation of micron-scale pores (holes) causing host cell membrane disruption and endolysin escape into the periplasmic space. Determines the precise timing of host cell lysis. Participates with the endolysin and spanin proteins in the sequential events which lead to the programmed host cell lysis releasing the mature viral particles from the host cell. Isoform Antiholin: Counteracts the aggregation of the holin molecules and thus of pore formation. In Listeria monocytogenes (Bacteriophage A118), this protein is Putative antiholin (hol).